The sequence spans 119 residues: ATP-dependent Clp protease adapter protein ClpS (119 aa).

Residues Met-1–Asp-24 are disordered.

It belongs to the ClpS family. Binds to the N-terminal domain of the chaperone ClpA.

Functionally, involved in the modulation of the specificity of the ClpAP-mediated ATP-dependent protein degradation. The polypeptide is ATP-dependent Clp protease adapter protein ClpS (Gluconobacter oxydans (strain 621H) (Gluconobacter suboxydans)).